Here is a 391-residue protein sequence, read N- to C-terminus: Phosphoglycerate kinase (391 aa).

Residues 21-23, Arg36, 59-62, Arg113, and Arg146 each bind substrate; these read DLN and HLGR. ATP-binding positions include Lys197, Glu319, and 345 to 348; that span reads GGDT.

This sequence belongs to the phosphoglycerate kinase family. As to quaternary structure, monomer.

The protein resides in the cytoplasm. The catalysed reaction is (2R)-3-phosphoglycerate + ATP = (2R)-3-phospho-glyceroyl phosphate + ADP. It functions in the pathway carbohydrate degradation; glycolysis; pyruvate from D-glyceraldehyde 3-phosphate: step 2/5. The polypeptide is Phosphoglycerate kinase (Shewanella piezotolerans (strain WP3 / JCM 13877)).